Here is a 400-residue protein sequence, read N- to C-terminus: Nicotinate phosphoribosyltransferase (400 aa).

Residue H220 is modified to Phosphohistidine; by autocatalysis.

The protein belongs to the NAPRTase family. Transiently phosphorylated on a His residue during the reaction cycle. Phosphorylation strongly increases the affinity for substrates and increases the rate of nicotinate D-ribonucleotide production. Dephosphorylation regenerates the low-affinity form of the enzyme, leading to product release.

The catalysed reaction is nicotinate + 5-phospho-alpha-D-ribose 1-diphosphate + ATP + H2O = nicotinate beta-D-ribonucleotide + ADP + phosphate + diphosphate. Its pathway is cofactor biosynthesis; NAD(+) biosynthesis; nicotinate D-ribonucleotide from nicotinate: step 1/1. Catalyzes the synthesis of beta-nicotinate D-ribonucleotide from nicotinate and 5-phospho-D-ribose 1-phosphate at the expense of ATP. This Escherichia coli O157:H7 protein is Nicotinate phosphoribosyltransferase.